The primary structure comprises 66 residues: Large ribosomal subunit protein bL35 (66 aa).

Basic residues-rich tracts occupy residues 1 to 15 and 27 to 40; these read MPKL…KRFK and AGKR…TKKQ. Residues 1–40 are disordered; sequence MPKLKTKSGAKKRFKVTGTGKVMSAHAGKRHGMIKRTKKQ.

This sequence belongs to the bacterial ribosomal protein bL35 family.

The protein is Large ribosomal subunit protein bL35 of Rhodopseudomonas palustris (strain BisA53).